Reading from the N-terminus, the 385-residue chain is DNA replication and repair protein RecF (385 aa).

An ATP-binding site is contributed by Gly30–Thr37.

Belongs to the RecF family.

Its subcellular location is the cytoplasm. The RecF protein is involved in DNA metabolism; it is required for DNA replication and normal SOS inducibility. RecF binds preferentially to single-stranded, linear DNA. It also seems to bind ATP. This Mycobacterium leprae (strain Br4923) protein is DNA replication and repair protein RecF.